The following is a 762-amino-acid chain: MALAHNLGFPRIGRDRELKKAQEAYWKGELDEAGLCAVGRGLRAAHWQAQKAAGIELLPVGDFAWYDQVLTHSLTFGVIPERFRAKDGAKPTLQTLFAMARGVSDSCCGGAHAQEMTKWFDTNYHYLVPEFTADQQFALSWEQLFEEVEEAKALGHAVKPVVIGPLTYLWLGKTKGADFDKLELLDRLLPLYDQILNRLAVQGVEWVQIDEPILALDLPQDWKNAYERVYNILQRAPLKKLIATYFGGLEDNLGLAANLPVDGLHIDLVRAPDQYPTILDRLPAYKVLSLGVVNGRNVWRCDLEKALEVLRHAHERLGDRLWVAPSCSLLHSPVDLAREDKLDDELKSWLAFAVQKCQEVALLAKAINQPEAADVVTVLAQSRAVQHRRATSPRIHKPAVQARVAAIKPADSQRATAFEQRIAKQRAGLDLPAFPTTTIGSFPQTSAIRLARQSFKQGKLTEADYVEAMHSEIRHAVEIQENLGLDVLVHGEAERNDMVEYFAEQLDGYVFTRFGWVQSYGSRCVKPAVIFGDLSRPKAMTVEWIKYAQGLTRKAMKGMLTGPVTMLMWSFPREDVTREVQARQLALAIRDEVVDLEAAGIKIVQIDEAAFREGLPLRRSAWPHYLEWATEAFRLCASDVRDETQIHTHMCYSEFNDVIESIAAMDADVITIETSRSDMELLEAFERFDYPNEIGPGVYDIHSPRVPTKEEMVKLLRKAAQRIPAERLWVNPDCGLKTRAWPETEAALVNMVAAARELRATA.

Residues Arg-16–Lys-19 and Lys-118 contribute to the 5-methyltetrahydropteroyltri-L-glutamate site. Residues Ile-439–Ser-441 and Glu-492 each bind L-homocysteine. Residues Ile-439–Ser-441 and Glu-492 contribute to the L-methionine site. Residues Arg-523–Cys-524 and Trp-569 contribute to the 5-methyltetrahydropteroyltri-L-glutamate site. Asp-607 is a binding site for L-homocysteine. Asp-607 lines the L-methionine pocket. Position 613 (Glu-613) interacts with 5-methyltetrahydropteroyltri-L-glutamate. His-649, Cys-651, and Glu-673 together coordinate Zn(2+). His-702 serves as the catalytic Proton donor. Cys-734 provides a ligand contact to Zn(2+).

The protein belongs to the vitamin-B12 independent methionine synthase family. Zn(2+) is required as a cofactor.

The catalysed reaction is 5-methyltetrahydropteroyltri-L-glutamate + L-homocysteine = tetrahydropteroyltri-L-glutamate + L-methionine. It functions in the pathway amino-acid biosynthesis; L-methionine biosynthesis via de novo pathway; L-methionine from L-homocysteine (MetE route): step 1/1. In terms of biological role, catalyzes the transfer of a methyl group from 5-methyltetrahydrofolate to homocysteine resulting in methionine formation. This Pseudomonas entomophila (strain L48) protein is 5-methyltetrahydropteroyltriglutamate--homocysteine methyltransferase.